Here is a 284-residue protein sequence, read N- to C-terminus: tRNA pseudouridine synthase A (284 aa).

The active-site Nucleophile is the D62. Position 120 (Y120) interacts with substrate.

This sequence belongs to the tRNA pseudouridine synthase TruA family. Homodimer.

It carries out the reaction uridine(38/39/40) in tRNA = pseudouridine(38/39/40) in tRNA. In terms of biological role, formation of pseudouridine at positions 38, 39 and 40 in the anticodon stem and loop of transfer RNAs. This Thermosynechococcus vestitus (strain NIES-2133 / IAM M-273 / BP-1) protein is tRNA pseudouridine synthase A.